The following is a 303-amino-acid chain: MGRLRFVVLLSIFPIKTFSEPCSTMALVLRDSIKISEFINLSASEKLLPSALTAVKSVRISKVDKIISYENDTLSDIDLLKGVKLVENGYVCLAGLVVTGEWNLPDNCKGGVSICLVDKRMKRANEATLGSYHTSACKKRFTFKIIPNYSVTTADALKGIWQVMTNIRGVEMEKGFCPLSLEFVSICVVYLNNIKLGLREKILNVTEGGPTELTEAVVDEFVEKVPMAARLKSFRSVNKKKPSNSSKFVNGKSRLNSRNKLNYENGDSDVGISVVDDIVVGNGVSDIRIDDDCESFDAQSDSY.

Belongs to the tobamovirus movement protein family.

Its subcellular location is the host cytoplasm. The protein resides in the host cytoskeleton. It is found in the host cell junction. It localises to the host plasmodesma. Its function is as follows. Transports viral genome to neighboring plant cells directly through plasmosdesmata, without any budding. The movement protein allows efficient cell to cell propagation, by bypassing the host cell wall barrier. Forms a ribonucleoprotein complex with viral RNA. Binds microtubules and modulates microtubule stability. Can bind double-stranded DNA. In Cymbidium (ORSV), this protein is Movement protein (MP).